The sequence spans 367 residues: Cell division protein FtsZ (367 aa).

GTP contacts are provided by residues 17-21, 104-106, Glu135, Lys139, and Asp183; these read GGGSN and GTG.

This sequence belongs to the FtsZ family. Homodimer. Polymerizes to form a dynamic ring structure in a strictly GTP-dependent manner. Interacts directly with several other division proteins.

Its subcellular location is the cytoplasm. Functionally, essential cell division protein that forms a contractile ring structure (Z ring) at the future cell division site. The regulation of the ring assembly controls the timing and the location of cell division. One of the functions of the FtsZ ring is to recruit other cell division proteins to the septum to produce a new cell wall between the dividing cells. Binds GTP and shows GTPase activity. The sequence is that of Cell division protein FtsZ from Aquifex aeolicus (strain VF5).